A 146-amino-acid chain; its full sequence is Large ribosomal subunit protein uL15 (146 aa).

The interval 1–53 is disordered; that stretch reads MILSNLKPVPGARHSKKRLGRGPGSGTGKTSGKGHKGQKARSGGGVRPGFEGG. 2 stretches are compositionally biased toward gly residues: residues 21 to 31 and 42 to 52; these read RGPGSGTGKTS and SGGGVRPGFEG.

Belongs to the universal ribosomal protein uL15 family. Part of the 50S ribosomal subunit.

Its function is as follows. Binds to the 23S rRNA. This is Large ribosomal subunit protein uL15 from Acholeplasma laidlawii (strain PG-8A).